Here is a 161-residue protein sequence, read N- to C-terminus: Protein-export protein SecB (161 aa).

The protein belongs to the SecB family. As to quaternary structure, homotetramer, a dimer of dimers. One homotetramer interacts with 1 SecA dimer.

It localises to the cytoplasm. In terms of biological role, one of the proteins required for the normal export of preproteins out of the cell cytoplasm. It is a molecular chaperone that binds to a subset of precursor proteins, maintaining them in a translocation-competent state. It also specifically binds to its receptor SecA. The chain is Protein-export protein SecB from Shewanella baltica (strain OS223).